The chain runs to 305 residues: MDDKELIEYFKSQMKEDPDMASAVAAIRTLLEFLKRDKGETIQGLRANLTSAIETLCGVDSSVAVSSGGELFLRFISLTSLEYSDYSKCKKIMIERGELFLRRISLSRNKIADLCHTFIKDGATILTHAYSRVVLRVLEAAVAAKKRFSVYVTESQPDLSGKKMAKALCHLNVPVTVVLDAAVGYIMEKADLVIVGAEGVVENGGIINKIGTNQMAVCAKAQNKPFYAVAESFKFVRLFPLNQQDVPDKFKYKADTLKVAQTGQDLKEEHPWVDYTAPSLITLLFTDLGVLTPSAVSDELIKLYL.

Residue K35 is modified to N6-acetyllysine.

The protein belongs to the eIF-2B alpha/beta/delta subunits family. In terms of assembly, component of the translation initiation factor 2B (eIF2B) complex which is a heterodecamer of two sets of five different subunits: alpha, beta, gamma, delta and epsilon. Subunits alpha, beta and delta comprise a regulatory subcomplex and subunits epsilon and gamma comprise a catalytic subcomplex. Within the complex, the hexameric regulatory complex resides at the center, with the two heterodimeric catalytic subcomplexes bound on opposite sides.

The protein localises to the cytoplasm. Its subcellular location is the cytosol. Activated by the chemical integrated stress response (ISR) inhibitor ISRIB which stimulates guanine nucleotide exchange factor activity for both phosphorylated and unphosphorylated eIF2. Acts as a component of the translation initiation factor 2B (eIF2B) complex, which catalyzes the exchange of GDP for GTP on eukaryotic initiation factor 2 (eIF2) gamma subunit. Its guanine nucleotide exchange factor activity is repressed when bound to eIF2 complex phosphorylated on the alpha subunit, thereby limiting the amount of methionyl-initiator methionine tRNA available to the ribosome and consequently global translation is repressed. The protein is Translation initiation factor eIF2B subunit alpha (EIF2B1) of Macaca fascicularis (Crab-eating macaque).